We begin with the raw amino-acid sequence, 113 residues long: Prefoldin subunit beta (113 aa).

Belongs to the prefoldin subunit beta family. Heterohexamer of two alpha and four beta subunits.

The protein localises to the cytoplasm. In terms of biological role, molecular chaperone capable of stabilizing a range of proteins. Seems to fulfill an ATP-independent, HSP70-like function in archaeal de novo protein folding. This is Prefoldin subunit beta from Methanococcus maripaludis (strain C6 / ATCC BAA-1332).